Here is a 186-residue protein sequence, read N- to C-terminus: Large ribosomal subunit protein eL15 (186 aa).

The interval 163–186 (RGLTSAGKKGRGLNKKGKGAEKVR) is disordered. Residues 170–179 (KKGRGLNKKG) show a composition bias toward basic residues.

This sequence belongs to the eukaryotic ribosomal protein eL15 family.

In Methanosphaera stadtmanae (strain ATCC 43021 / DSM 3091 / JCM 11832 / MCB-3), this protein is Large ribosomal subunit protein eL15.